Reading from the N-terminus, the 487-residue chain is MELLFVSLLSLFLLILLPLSLLFLFPSSFSTTTTEANKNSANLPPGLTGWPVVGESFQFLAAGWRGNPEKFIFDRIAKYSSYVYKTNLMLERTAVFCGAPAHKFLFSNENKLVQSWWPSSVNKIFPSSNQTSSKEEAMKMRKMLPNFFKPEALQGYIGIMDTIAQRHFAADWDNKDYIVVFPLCKRYTFWLACKIFMSIEDPKDVDRFLARFNLVAEGLLSIPIDLPGTPFHHSIKAAEFIREHLVAIIKQRKIDLAEGKASPTQDIMSYMLLTPDEDGKFMKEYDIADKILGLLVGGHDTASSACAFIVKYLAELPQVYQGVYKEQMEIAKSKGPGELLNWDDIQKMKYSWNVACEVLRLAPPLQGAFRDVLKDFMYEGFYIPKGWKVYWSAHSTHKNPEYFPEPYKFDPSRFDGSGPAPYTFVPFGGGPRMCPGKEYARLEILVFMHNLVKRFRWEKLIPDEKIVVNPMPVPEKGLPIRLFSYDA.

The helical transmembrane segment at 5–25 threads the bilayer; sequence FVSLLSLFLLILLPLSLLFLF. C434 serves as a coordination point for heme.

Belongs to the cytochrome P450 family. Requires heme as cofactor.

Its subcellular location is the membrane. The catalysed reaction is beta-amyrin + reduced [NADPH--hemoprotein reductase] + O2 = erythrodiol + oxidized [NADPH--hemoprotein reductase] + H2O + H(+). It carries out the reaction erythrodiol + reduced [NADPH--hemoprotein reductase] + O2 = oleanolic aldehyde + oxidized [NADPH--hemoprotein reductase] + 2 H2O + H(+). It catalyses the reaction oleanolic aldehyde + reduced [NADPH--hemoprotein reductase] + O2 = oleanolate + oxidized [NADPH--hemoprotein reductase] + H2O + 2 H(+). Its function is as follows. Catalyzes the C-28 oxidation of beta-amyrin to form erythrodiol. Catalyzes the C-28 oxidation of erythrodiol to form oleanolic aldehyde. Catalyzes the C-28 oxidation of oleanolic aldehyde to form oleanolate. The sequence is that of Cytochrome P450 716A75 from Maesa lanceolata (False assegai).